The sequence spans 211 residues: Flagellar calcium-binding protein (211 aa).

The disordered stretch occupies residues Met1–Glu29. Over residues Leu15–Glu29 the composition is skewed to basic and acidic residues. EF-hand domains lie at Glu45–Leu80, Asp81–Phe116, Tyr127–Trp162, and Ala164–Asp199. Positions 58, 60, 62, 64, and 69 each coordinate Ca(2+). Ca(2+) is bound by residues Asp140, Ser142, Asn144, Glu151, Asp177, Asn179, Thr181, Ser183, and Glu188.

The protein belongs to the calflagin family.

It is found in the cell projection. The protein localises to the cilium. It localises to the flagellum. Functionally, may contribute to the rapid motility of the trypanosomes, playing a role either in flagellar structure or in calcium metabolism. Could alternate between a GDP-bound inactive form to a calcium/GTP-bound active form. This chain is Flagellar calcium-binding protein (FCABP), found in Trypanosoma cruzi.